We begin with the raw amino-acid sequence, 198 residues long: Protein GrpE (198 aa).

Residues 1-58 (MTEKDQSVNNEEFAEKEDNTAKDSNTDEQIEKTASEDDVQNDSSAVDDKEKEIQQLKE) are disordered. Basic and acidic residues-rich tracts occupy residues 16–35 (KEDNTAKDSNTDEQIEKTAS) and 46–58 (VDDKEKEIQQLKE).

This sequence belongs to the GrpE family. Homodimer.

It is found in the cytoplasm. Participates actively in the response to hyperosmotic and heat shock by preventing the aggregation of stress-denatured proteins, in association with DnaK and GrpE. It is the nucleotide exchange factor for DnaK and may function as a thermosensor. Unfolded proteins bind initially to DnaJ; upon interaction with the DnaJ-bound protein, DnaK hydrolyzes its bound ATP, resulting in the formation of a stable complex. GrpE releases ADP from DnaK; ATP binding to DnaK triggers the release of the substrate protein, thus completing the reaction cycle. Several rounds of ATP-dependent interactions between DnaJ, DnaK and GrpE are required for fully efficient folding. The chain is Protein GrpE from Staphylococcus carnosus (strain TM300).